Reading from the N-terminus, the 121-residue chain is Small ribosomal subunit protein uS13 (121 aa).

Positions 95–121 (GLPVRGQKTKTNARTRKGKRKTVGAKS) are disordered.

It belongs to the universal ribosomal protein uS13 family. In terms of assembly, part of the 30S ribosomal subunit. Forms a loose heterodimer with protein S19. Forms two bridges to the 50S subunit in the 70S ribosome.

Functionally, located at the top of the head of the 30S subunit, it contacts several helices of the 16S rRNA. In the 70S ribosome it contacts the 23S rRNA (bridge B1a) and protein L5 of the 50S subunit (bridge B1b), connecting the 2 subunits; these bridges are implicated in subunit movement. Contacts the tRNAs in the A and P-sites. The chain is Small ribosomal subunit protein uS13 from Campylobacter jejuni subsp. jejuni serotype O:23/36 (strain 81-176).